A 112-amino-acid polypeptide reads, in one-letter code: Tyrosine-protein phosphatase 7 (112 aa).

The region spanning 1-112 (NNVTIIVMIT…SSPESGPIVV (112 aa)) is the Tyrosine-protein phosphatase domain. Residue Asp82 coordinates substrate.

The protein belongs to the protein-tyrosine phosphatase family.

It catalyses the reaction O-phospho-L-tyrosyl-[protein] + H2O = L-tyrosyl-[protein] + phosphate. The sequence is that of Tyrosine-protein phosphatase 7 (STY-7) from Styela plicata (Wrinkled sea squirt).